The primary structure comprises 396 residues: Pyridinium-3,5-bisthiocarboxylic acid mononucleotide nickel insertion protein (396 aa).

It belongs to the LarC family.

It carries out the reaction Ni(II)-pyridinium-3,5-bisthiocarboxylate mononucleotide = pyridinium-3,5-bisthiocarboxylate mononucleotide + Ni(2+). In terms of biological role, involved in the biosynthesis of a nickel-pincer cofactor ((SCS)Ni(II) pincer complex). Binds Ni(2+), and functions in nickel delivery to pyridinium-3,5-bisthiocarboxylic acid mononucleotide (P2TMN), to form the mature cofactor. Is thus probably required for the activation of nickel-pincer cofactor-dependent enzymes. This Moorella thermoacetica (strain ATCC 39073 / JCM 9320) protein is Pyridinium-3,5-bisthiocarboxylic acid mononucleotide nickel insertion protein.